The chain runs to 329 residues: ATP-dependent (S)-NAD(P)H-hydrate dehydratase (329 aa).

Residues 1–28 constitute a mitochondrion transit peptide; that stretch reads MALGPGCRAVRGCRPVLKRAFSLHKAHS. In terms of domain architecture, YjeF C-terminal spans 35–326; the sequence is ILQLVRSVVP…AEVGPAFRRL (292 aa). Lys-49 carries the N6-acetyllysine modification. Position 67 is a phosphotyrosine (Tyr-67). (6S)-NADPHX-binding positions include Gly-135 and 188-194; that span reads NHVEFGR. ATP-binding positions include 228–232 and 247–256; these read KGEQD and GSGRRCGGQG. Position 257 (Asp-257) interacts with (6S)-NADPHX.

It belongs to the NnrD/CARKD family. Requires Mg(2+) as cofactor.

The protein localises to the mitochondrion. The enzyme catalyses (6S)-NADHX + ATP = ADP + phosphate + NADH + H(+). It carries out the reaction (6S)-NADPHX + ATP = ADP + phosphate + NADPH + H(+). Its function is as follows. Catalyzes the dehydration of the S-form of NAD(P)HX at the expense of ATP, which is converted to ADP. Together with NAD(P)HX epimerase, which catalyzes the epimerization of the S- and R-forms, the enzyme allows the repair of both epimers of NAD(P)HX, a damaged form of NAD(P)H that is a result of enzymatic or heat-dependent hydration. This chain is ATP-dependent (S)-NAD(P)H-hydrate dehydratase, found in Bos taurus (Bovine).